The primary structure comprises 125 residues: Large ribosomal subunit protein uL30 (125 aa).

Positions 1–61 (MSKLKVKLLR…HLVGVAYRID (61 aa)) are large ribosomal subunit protein uL30. The interval 62-125 (FSGDIPTVER…KNWKGEEVEL (64 aa)) is unknown.

The protein belongs to the universal ribosomal protein uL30 family. As to quaternary structure, part of the 50S ribosomal subunit.

This is Large ribosomal subunit protein uL30 from Aquifex aeolicus (strain VF5).